The chain runs to 347 residues: uncharacterized protein (347 aa).

Disordered stretches follow at residues 1–40 (MAQE…SNSM), 72–92 (SCED…IQGS), 133–158 (SDST…QLTL), 173–209 (ENQK…QVSH), and 306–347 (EDPR…PPDF). Polar residues predominate over residues 15–25 (PGQNITETTTD). Basic and acidic residues predominate over residues 143–154 (GDNKDKHPKEKT). Positions 179 to 194 (KDDDSVFPESAQEEDS) are enriched in acidic residues. Positions 195–209 (QLPSSSLPGMAQVSH) are enriched in polar residues. Basic and acidic residues predominate over residues 306-318 (EDPREANERPREL). Basic residues predominate over residues 319–330 (ARKKRFSYRSKR).

This is an uncharacterized protein from Bos taurus (Bovine).